The sequence spans 935 residues: Coatomer subunit gamma (935 aa).

5 HEAT repeats span residues 258–296 (PQLFSQFRPLLSDWLSNKFESVQLETAKLITSFATRNSR), 337–372 (PEKIVVCNPELESLINDSNRNISTYAITTLLKTGTS), 373–410 (KNISSLISTITNFIHDVSDDFKIIIIDAVRTLSLNFPQ), 412–449 (WKSILNFLIDVLKNSEGGFKFKNSIVEALIDIVSFVPQ), and 524–562 (PTLYESIISLLKRIANDKDDEVRDRATIALEFIDSARNK). Positions 630–656 (KSETTLDTTPEAESVPEKRADANSFAG) are disordered. Thr638 is modified (phosphothreonine). Residue Ser643 is modified to Phosphoserine. Residue Lys647 forms a Glycyl lysine isopeptide (Lys-Gly) (interchain with G-Cter in ubiquitin) linkage. A Phosphoserine modification is found at Ser653.

Belongs to the COPG family. As to quaternary structure, oligomeric complex that consists of at least the alpha, beta, beta', gamma, delta, epsilon and zeta subunits. Interacts (via C-terminus) with GEA1 (via N-terminal region) and KEI1 (via C-terminal region).

It is found in the cytoplasm. It localises to the golgi apparatus membrane. Its subcellular location is the cytoplasmic vesicle. The protein localises to the COPI-coated vesicle membrane. The protein resides in the endosome. The coatomer is a cytosolic protein complex that binds to dilysine motifs and reversibly associates with Golgi non-clathrin-coated vesicles, which further mediate biosynthetic protein transport from the ER, via the Golgi up to the trans Golgi network. Coatomer complex is required for budding from Golgi membranes, and is essential for the retrograde Golgi-to-ER transport of dilysine-tagged proteins. The chain is Coatomer subunit gamma (SEC21) from Saccharomyces cerevisiae (strain ATCC 204508 / S288c) (Baker's yeast).